Here is a 363-residue protein sequence, read N- to C-terminus: NADH-quinone oxidoreductase subunit H (363 aa).

10 helical membrane passes run 29-49 (VLKILMIAIPLIVSVAFYVVW), 62-82 (GPMYVGMGLFQAFADVFKLLF), 94-114 (VIFVIAPLLTLAPSFAAWAVV), 127-147 (VGLLYLLAMTSLGVYGIILAG), 166-186 (VVSYEIAMGFALVGVMIAAGS), 202-222 (FFDWFLIPLFPLFIVYWVSGV), 239-257 (IVAGHMVEYSGSVFALFFL), 264-286 (ILVSFLISIFFLGGWLSPIQGWV), 293-313 (LIDWVWNGGWPWLLLKVLFFA), and 339-359 (FIPLTIVWIAVTALMVFSGVI).

Belongs to the complex I subunit 1 family. NDH-1 is composed of 14 different subunits. Subunits NuoA, H, J, K, L, M, N constitute the membrane sector of the complex.

The protein localises to the cell inner membrane. The catalysed reaction is a quinone + NADH + 5 H(+)(in) = a quinol + NAD(+) + 4 H(+)(out). NDH-1 shuttles electrons from NADH, via FMN and iron-sulfur (Fe-S) centers, to quinones in the respiratory chain. The immediate electron acceptor for the enzyme in this species is believed to be ubiquinone. Couples the redox reaction to proton translocation (for every two electrons transferred, four hydrogen ions are translocated across the cytoplasmic membrane), and thus conserves the redox energy in a proton gradient. This subunit may bind ubiquinone. This chain is NADH-quinone oxidoreductase subunit H, found in Xylella fastidiosa (strain M12).